The sequence spans 482 residues: Chitobiosyldiphosphodolichol beta-mannosyltransferase (482 aa).

Residues 1-2 lie on the Lumenal side of the membrane; sequence MA. A helical membrane pass occupies residues 3 to 23; that stretch reads ASCVALLVLALLLLVLLLGLW. Residues 24–99 are Cytoplasmic-facing; sequence KRGRQTGRAR…DLRGLGAGPR (76 aa). An intramembrane region (helical) is located at residues 100-120; that stretch reads ILQYGVKVVFQAVYLLWKMMR. Over 121–482 the chain is Cytoplasmic; the sequence is MDPAAYIFLQ…PCGHPSCRGF (362 aa). The residue at position 242 (S242) is a Phosphoserine.

The protein belongs to the glycosyltransferase group 1 family. Glycosyltransferase 33 subfamily.

It is found in the endoplasmic reticulum membrane. It catalyses the reaction an N,N'-diacetylchitobiosyl-diphospho-di-trans,poly-cis-dolichol + GDP-alpha-D-mannose = a beta-D-Man-(1-&gt;4)-beta-D-GlcNAc-(1-&gt;4)-alpha-D-GlcNAc-diphospho-di-trans,poly-cis-dolichol + GDP + H(+). It functions in the pathway protein modification; protein glycosylation. Functionally, mannosyltransferase that operates in the biosynthetic pathway of dolichol-linked oligosaccharides, the glycan precursors employed in protein asparagine (N)-glycosylation. The assembly of dolichol-linked oligosaccharides begins on the cytosolic side of the endoplasmic reticulum membrane and finishes in its lumen. The sequential addition of sugars to dolichol pyrophosphate produces dolichol-linked oligosaccharides containing fourteen sugars, including two GlcNAcs, nine mannoses and three glucoses. Once assembled, the oligosaccharide is transferred from the lipid to nascent proteins by oligosaccharyltransferases. Catalyzes, on the cytoplasmic face of the endoplasmic reticulum, the addition of the first mannose residues to the dolichol-linked oligosaccharide chain, to produce Man1GlcNAc(2)-PP-dolichol core oligosaccharide. Man1GlcNAc(2)-PP-dolichol is a substrate for ALG2, the following enzyme in the biosynthetic pathway. This is Chitobiosyldiphosphodolichol beta-mannosyltransferase from Mus musculus (Mouse).